The following is a 281-amino-acid chain: 4-diphosphocytidyl-2-C-methyl-D-erythritol kinase (281 aa).

Lysine 15 is a catalytic residue. Residue 98 to 108 (PTGAGLGGGSS) participates in ATP binding. The active site involves aspartate 140.

Belongs to the GHMP kinase family. IspE subfamily.

The catalysed reaction is 4-CDP-2-C-methyl-D-erythritol + ATP = 4-CDP-2-C-methyl-D-erythritol 2-phosphate + ADP + H(+). It participates in isoprenoid biosynthesis; isopentenyl diphosphate biosynthesis via DXP pathway; isopentenyl diphosphate from 1-deoxy-D-xylulose 5-phosphate: step 3/6. Functionally, catalyzes the phosphorylation of the position 2 hydroxy group of 4-diphosphocytidyl-2C-methyl-D-erythritol. The polypeptide is 4-diphosphocytidyl-2-C-methyl-D-erythritol kinase (Neisseria gonorrhoeae (strain NCCP11945)).